Here is a 279-residue protein sequence, read N- to C-terminus: Large ribosomal subunit protein uL2 (279 aa).

The interval Asn202–Gly279 is disordered. A compositionally biased stretch (basic residues) spans Gly209–Asn220.

Belongs to the universal ribosomal protein uL2 family. Part of the 50S ribosomal subunit. Forms a bridge to the 30S subunit in the 70S ribosome.

Its function is as follows. One of the primary rRNA binding proteins. Required for association of the 30S and 50S subunits to form the 70S ribosome, for tRNA binding and peptide bond formation. It has been suggested to have peptidyltransferase activity; this is somewhat controversial. Makes several contacts with the 16S rRNA in the 70S ribosome. This chain is Large ribosomal subunit protein uL2, found in Methylocella silvestris (strain DSM 15510 / CIP 108128 / LMG 27833 / NCIMB 13906 / BL2).